Reading from the N-terminus, the 313-residue chain is Trimeric intracellular cation channel type 1B.2 (313 aa).

The Lumenal segment spans residues 1-28 (MGWVPDEWSIDHDTLIDAGGYVQKLKLY). The helical transmembrane segment at 29-48 (PYFDAAHYVLTCLSVRHDLG) threads the bilayer. Residues 49–57 (PDAISFSRK) lie on the Cytoplasmic side of the membrane. Residues 58–82 (HPFSCWLSCMLMSFAGSFLSCFLLG) form a discontinuously helical membrane-spanning segment. At 83 to 90 (EPIISPLK) the chain is on the lumenal side. A helical transmembrane segment spans residues 91–108 (QHADILLGSIVWYLVFYS). At 109–118 (PFDVVFRLAT) the chain is on the cytoplasmic side. Residues 119 to 149 (WFPVKLGLSVLKEVQRTHKIAAGVKHAVRIY) form a helical membrane-spanning segment. K130 and R134 together coordinate a 1,2-diacyl-sn-glycero-3-phospho-(1D-myo-inositol-4,5-bisphosphate). Over 150-151 (PE) the chain is Lumenal. A discontinuously helical transmembrane segment spans residues 152–178 (SYLVQILVGVAKGAGSGVVKIVEQLAR). G168 is a binding site for a 1,2-diacyl-sn-glycero-3-phospho-(1D-myo-inositol-4,5-bisphosphate). The Cytoplasmic segment spans residues 179–192 (GTWHPTNHEILRPS). A helical membrane pass occupies residues 193-210 (FTTKACVIASIVFTLERH). Topologically, residues 211-216 (SMYVTA) are lumenal. A helical transmembrane segment spans residues 217 to 239 (PHDLVYLCVVGFFIYFKLASLCL). At 240-313 (SVHDVLMPIE…MSNGTDKKNN (74 aa)) the chain is on the cytoplasmic side.

It belongs to the TMEM38 family. Homotrimer; trimerization probably requires binding to phosphatidylinositol 4,5-bisphosphate (PIP2).

Its subcellular location is the endoplasmic reticulum membrane. Its function is as follows. Potassium channel that mediates transmembrane potassium transport. Might be required for maintenance of rapid intracellular calcium release. May act as a potassium counter-ion channel that functions in synchronization with calcium release from intracellular stores. Binds phosphatidylinositol 4,5-bisphosphate (PIP2). This is Trimeric intracellular cation channel type 1B.2 from Caenorhabditis elegans.